Here is a 91-residue protein sequence, read N- to C-terminus: Non-specific lipid-transfer protein 1 (91 aa).

4 disulfide bridges follow: Cys-3–Cys-50, Cys-13–Cys-27, Cys-28–Cys-73, and Cys-48–Cys-87.

This sequence belongs to the plant LTP family.

Plant non-specific lipid-transfer proteins transfer phospholipids as well as galactolipids across membranes. May play a role in wax or cutin deposition in the cell walls of expanding epidermal cells and certain secretory tissues. The protein is Non-specific lipid-transfer protein 1 of Morus nigra (Black mulberry).